Reading from the N-terminus, the 270-residue chain is Protein-ADP-ribose hydrolase (270 aa).

Residues 73–267 form the Macro domain; it reads VSVKDCQKTN…LYDTYLQKEN (195 aa). ADP-D-ribose is bound by residues aspartate 92, isoleucine 93, and asparagine 106. Zn(2+) contacts are provided by cysteine 112, histidine 117, and cysteine 119. ADP-D-ribose contacts are provided by cysteine 119, isoleucine 120, aspartate 121, serine 212, threonine 213, glycine 214, glutamate 215, and phenylalanine 216.

Belongs to the MacroD-type family. Zn-Macro subfamily. The cofactor is Zn(2+).

It carries out the reaction 4-O-(ADP-D-ribosyl)-L-aspartyl-[protein] + H2O = L-aspartyl-[protein] + ADP-D-ribose + H(+). Its function is as follows. ADP-ribosylhydrolase that specifically reverses the SirTM-mediated mono-ADP-ribosylation at an asparatate residue of GcvH-L, by releasing ADP-ribose from the target protein. May play a role in the regulation of the response to host-induced oxidative stress. The protein is Protein-ADP-ribose hydrolase of Streptococcus pyogenes serotype M3 (strain ATCC BAA-595 / MGAS315).